The following is a 573-amino-acid chain: Proline--tRNA ligase (573 aa).

Belongs to the class-II aminoacyl-tRNA synthetase family. ProS type 1 subfamily. As to quaternary structure, homodimer.

Its subcellular location is the cytoplasm. The catalysed reaction is tRNA(Pro) + L-proline + ATP = L-prolyl-tRNA(Pro) + AMP + diphosphate. Functionally, catalyzes the attachment of proline to tRNA(Pro) in a two-step reaction: proline is first activated by ATP to form Pro-AMP and then transferred to the acceptor end of tRNA(Pro). As ProRS can inadvertently accommodate and process non-cognate amino acids such as alanine and cysteine, to avoid such errors it has two additional distinct editing activities against alanine. One activity is designated as 'pretransfer' editing and involves the tRNA(Pro)-independent hydrolysis of activated Ala-AMP. The other activity is designated 'posttransfer' editing and involves deacylation of mischarged Ala-tRNA(Pro). The misacylated Cys-tRNA(Pro) is not edited by ProRS. The protein is Proline--tRNA ligase of Methylobacillus flagellatus (strain ATCC 51484 / DSM 6875 / VKM B-1610 / KT).